The sequence spans 225 residues: GTP cyclohydrolase III (225 aa).

The protein belongs to the archaeal-type GTP cyclohydrolase family.

The catalysed reaction is GTP + 3 H2O = 2-amino-5-formylamino-6-(5-phospho-D-ribosylamino)pyrimidin-4(3H)-one + 2 phosphate + 2 H(+). Functionally, catalyzes the formation of 2-amino-5-formylamino-6-ribofuranosylamino-4(3H)-pyrimidinone ribonucleotide monophosphate and inorganic phosphate from GTP. Also has an independent pyrophosphate phosphohydrolase activity. This is GTP cyclohydrolase III from Sulfurisphaera tokodaii (strain DSM 16993 / JCM 10545 / NBRC 100140 / 7) (Sulfolobus tokodaii).